The primary structure comprises 539 residues: Glucans biosynthesis protein D (539 aa).

Residues 1–29 constitute a signal peptide (tat-type signal); it reads MNRRNLLKASMALAAYGSVSASGLFAARA.

This sequence belongs to the OpgD/OpgG family. In terms of processing, predicted to be exported by the Tat system. The position of the signal peptide cleavage has not been experimentally proven.

Its subcellular location is the periplasm. Its pathway is glycan metabolism; osmoregulated periplasmic glucan (OPG) biosynthesis. Its function is as follows. Probably involved in the control of the structural glucose backbone of osmoregulated periplasmic glucans (OPGs). The polypeptide is Glucans biosynthesis protein D (Pseudomonas syringae pv. syringae (strain B728a)).